Reading from the N-terminus, the 1034-residue chain is MERARRLAMLGRLVSQTKHNPSISSPALCSPSRYVSSLSPYVCGGTNVRSDRNLNGFGSQVRTISVEALKPSDTFPRRHNSATPEEQTKMAEFVGFSNLDSLIDATVPKSIRLDSMKYSKFDEGLTESQMIAHMQDLASKNKIFKSFIGMGYYNTSVPTVILRNIMENPGWYTQYTPYQAEIAQGRLESLLNFQTMITDLTGLPMSNASLLDEGTAAAEAMAMCNNIQKGKKKTFIIASNCHPQTIDICKTRADGFDLKVVTSDLKDFDYSSGDVCGVLVQYPGTEGELLDYSEFIKNAHANGVKVVMASDLLALTILKPPGELGADIVVGSAQRFGVPMGYGGPHAAFLATSQEYKRMMPGRIIGVSVDSSGKPALRMAMQTREQHIRRDKATSNICTAQALLANMAAMYGVYHGPEGLKTIAKRVHGLAGTFAAGLKKLGTVQVQDLPFFDTVKVTCADSKAIAEEACKHKMNLRIVDKNTITVAFDETTTIEDVDTLFKVFALGKPVPFTAASIAPEVQDAIPSGLVRETPYLTHPIFNMYHTEHELLRYISKLQSKDLSLCHSMIPLGSCTMKLNATTEMMPVTWPAFADIHPFAPTEQAQGYQEMFKNLGDLLCTITGFDSFSLQPNAGAAGEYAGLMVIRAYHMARGDHHRNVCIIPVSAHGTNPASAAMCGMKIITVGTDSKGNINIEELRKAAEANKENLSALMVTYPSTHGVYEEGIDEICKIIHDNGGQVYMDGANMNAQVGLTSPGWIGADVCHLNLHKTFCIPHGGGGPGMGPIGVKKHLAPYLPSHPVVPTGGIPAPEESQPLGTIAAAPWGSALILPISYTYIAMMGSQGITNASKIAILNANYMAKRLENHYPILFRGVNGTVAHEFIVDLRPLKTTAGIEPEDVAKRLIDYGFHGPTMSWPVPGTLMIEPTESESKAELDRFCDALISIRQEIAEIEKGNVDFNNNVIKGAPHPPQLLMADKWTKPYSREYAAYPAPWLRAAKFWPTTCRVDNVYGDRNLICTLQPPQEYEEKAEATA.

The transit peptide at 1–63 (MERARRLAML…LNGFGSQVRT (63 aa)) directs the protein to the mitochondrion. At Lys-770 the chain carries N6-(pyridoxal phosphate)lysine.

The protein belongs to the GcvP family. In terms of assembly, homodimer. The glycine cleavage system is composed of four proteins: P, T, L and H. Pyridoxal 5'-phosphate serves as cofactor.

It localises to the mitochondrion. It catalyses the reaction N(6)-[(R)-lipoyl]-L-lysyl-[glycine-cleavage complex H protein] + glycine + H(+) = N(6)-[(R)-S(8)-aminomethyldihydrolipoyl]-L-lysyl-[glycine-cleavage complex H protein] + CO2. Functionally, the glycine cleavage system catalyzes the degradation of glycine. The P protein binds the alpha-amino group of glycine through its pyridoxal phosphate cofactor; CO(2) is released and the remaining methylamine moiety is then transferred to the lipoamide cofactor of the H protein. This Flaveria anomala (Yellowtops) protein is Glycine dehydrogenase (decarboxylating), mitochondrial (GDCSP).